The chain runs to 347 residues: Lipoyl synthase (347 aa).

Positions 55, 60, 66, 81, 85, 88, and 292 each coordinate [4Fe-4S] cluster. In terms of domain architecture, Radical SAM core spans 67 to 281 (WEDREASFLI…SEAAYDMGFP (215 aa)).

This sequence belongs to the radical SAM superfamily. Lipoyl synthase family. [4Fe-4S] cluster serves as cofactor.

It is found in the cytoplasm. It catalyses the reaction [[Fe-S] cluster scaffold protein carrying a second [4Fe-4S](2+) cluster] + N(6)-octanoyl-L-lysyl-[protein] + 2 oxidized [2Fe-2S]-[ferredoxin] + 2 S-adenosyl-L-methionine + 4 H(+) = [[Fe-S] cluster scaffold protein] + N(6)-[(R)-dihydrolipoyl]-L-lysyl-[protein] + 4 Fe(3+) + 2 hydrogen sulfide + 2 5'-deoxyadenosine + 2 L-methionine + 2 reduced [2Fe-2S]-[ferredoxin]. It participates in protein modification; protein lipoylation via endogenous pathway; protein N(6)-(lipoyl)lysine from octanoyl-[acyl-carrier-protein]: step 2/2. Its function is as follows. Catalyzes the radical-mediated insertion of two sulfur atoms into the C-6 and C-8 positions of the octanoyl moiety bound to the lipoyl domains of lipoate-dependent enzymes, thereby converting the octanoylated domains into lipoylated derivatives. The protein is Lipoyl synthase of Corynebacterium urealyticum (strain ATCC 43042 / DSM 7109).